The chain runs to 530 residues: Type 2 DNA topoisomerase 6 subunit B (530 aa).

ATP contacts are provided by residues N42, D76, 97-98 (SK), 106-113 (GMYGLGVK), and K427.

It belongs to the TOP6B family. In terms of assembly, homodimer. Heterotetramer of two Top6A and two Top6B chains.

The catalysed reaction is ATP-dependent breakage, passage and rejoining of double-stranded DNA.. Functionally, relaxes both positive and negative superturns and exhibits a strong decatenase activity. In Saccharolobus islandicus (strain Y.N.15.51 / Yellowstone #2) (Sulfolobus islandicus), this protein is Type 2 DNA topoisomerase 6 subunit B.